We begin with the raw amino-acid sequence, 215 residues long: Protein GET1 (215 aa).

The Lumenal segment spans residues 1-4; that stretch reads MINL. The helical transmembrane segment at 5-24 threads the bilayer; the sequence is ALVIFLCTLLNQIVSWVGKS. The Cytoplasmic portion of the chain corresponds to 25–108; sequence VLQEIAFTAY…SFSKKFSTLL (84 aa). Residues 73–94 are a coiled coil; the sequence is AKLRRKLDKGLADLEKTNNTLS. The helical transmembrane segment at 109 to 129 threads the bilayer; that stretch reads WLMTTGAQFLLSWWFRKQPIF. Over 130–153 the chain is Lumenal; the sequence is WLPEGWVPYPVAWLLSFPSAPIGS. Residues 154 to 170 traverse the membrane as a helical segment; sequence VSSGAWGAICRRVLSTL. Topologically, residues 171 to 215 are cytoplasmic; that stretch reads QEIIQSLLAPSPAATGPVPTGPSSAKNDQPEAKIEALALEHEKLD. A disordered region spans residues 182–202; the sequence is PAATGPVPTGPSSAKNDQPEA.

Belongs to the WRB/GET1 family. In terms of assembly, interacts with GET3.

The protein resides in the endoplasmic reticulum membrane. Its function is as follows. Required for the post-translational delivery of tail-anchored (TA) proteins to the endoplasmic reticulum. Acts as a membrane receptor for soluble GET3, which recognizes and selectively binds the transmembrane domain of TA proteins in the cytosol. The polypeptide is Protein GET1 (Cryptococcus neoformans var. neoformans serotype D (strain JEC21 / ATCC MYA-565) (Filobasidiella neoformans)).